The sequence spans 106 residues: Iron-sulfur cluster assembly protein CyaY (106 aa).

Belongs to the frataxin family.

Functionally, involved in iron-sulfur (Fe-S) cluster assembly. May act as a regulator of Fe-S biogenesis. In Escherichia coli O139:H28 (strain E24377A / ETEC), this protein is Iron-sulfur cluster assembly protein CyaY.